The chain runs to 247 residues: Cell division protein ZapD (247 aa).

The protein belongs to the ZapD family. In terms of assembly, interacts with FtsZ.

The protein localises to the cytoplasm. In terms of biological role, cell division factor that enhances FtsZ-ring assembly. Directly interacts with FtsZ and promotes bundling of FtsZ protofilaments, with a reduction in FtsZ GTPase activity. In Salmonella arizonae (strain ATCC BAA-731 / CDC346-86 / RSK2980), this protein is Cell division protein ZapD.